A 242-amino-acid polypeptide reads, in one-letter code: Pyr4-family terpene cyclase mfmH (242 aa).

Transmembrane regions (helical) follow at residues 25–45 (VQDG…ILYI), 55–75 (GMPL…GAAI), 80–100 (AQVV…YTTW), and 116–136 (NLGW…WAFL). Asn-170 carries N-linked (GlcNAc...) asparagine glycosylation. The next 2 helical transmembrane spans lie at 175–195 (SWGI…IFVW) and 211–231 (VTIF…FVYA).

The protein belongs to the paxB family.

Its subcellular location is the membrane. It participates in secondary metabolite biosynthesis; terpenoid biosynthesis. In terms of biological role, terpene cyclase; part of the gene cluster that mediates the biosynthesis of the phthalide-terpenoid hybrid 11'-O-desmethylfendlerol. Within the pathway, mfmH catalyzes the last step and cyclizes the prenyl unit of 5-O-farnesylcyclopolic acid into a drimane-like structure to yield 11'-O-desmethylfendlerol. The biosynthesis of 11'-O-desmethylfendlerol begins with the NR-PKS mfmB that forms 3,5-dimethylorsellinic acid (DMOA), which is then transformed into the phthalide 5,7-dihydroxy-4-(hydroxymethyl)-6-methylphthalide by the cytochrome P450 monooxygenase mfmA and the hydrolase mfmC. Subsequently, the methyltransferase mfmE catalyzes 7-O-methylation to yield 5-hydroxy-4-(hydroxymethyl)-7-methoxy-6-methylphthalide, which undergoes C-3 hydroxylation by the cytochrome P450 monooxygenase mfmF. The resultant cyclopolic acid (2,5-dihydroxy-4-(hydroxymethyl)-7-methoxy-6-methylphthalide) is then farnesylated by the DMATS-type prenyltransferase mfmD to afford 5-O-farnesylcyclopolic acid. Finally, the Pyr4-family terpene cyclase mfmH cyclizes the farnesyl moiety of 5-O-farnesylcyclopolic acid into a drimane-like structure, thus completing the biosynthesis of 11'-O-desmethylfendlerol. In Annulohypoxylon moriforme (Filamentous fungus), this protein is Pyr4-family terpene cyclase mfmH.